A 53-amino-acid chain; its full sequence is Cytochrome c oxidase subunit 7e (53 aa).

Slime mold cytochrome c oxidase consists of at least seven different polypeptides species, subunits I, II, III, IV, V, VI, and VIIe/s in order of MW.

It is found in the mitochondrion inner membrane. It carries out the reaction 4 Fe(II)-[cytochrome c] + O2 + 8 H(+)(in) = 4 Fe(III)-[cytochrome c] + 2 H2O + 4 H(+)(out). Functionally, this protein is one of the nuclear-coded polypeptide chains of cytochrome c oxidase, the terminal oxidase in mitochondrial electron transport. The sequence is that of Cytochrome c oxidase subunit 7e (cxgE) from Dictyostelium discoideum (Social amoeba).